Reading from the N-terminus, the 164-residue chain is Cyclic pyranopterin monophosphate synthase (164 aa).

Substrate-binding positions include 75-77 and 116-117; these read MCH and ME. Residue Asp-131 is part of the active site.

Belongs to the MoaC family. As to quaternary structure, homohexamer; trimer of dimers.

It carries out the reaction (8S)-3',8-cyclo-7,8-dihydroguanosine 5'-triphosphate = cyclic pyranopterin phosphate + diphosphate. It participates in cofactor biosynthesis; molybdopterin biosynthesis. Its function is as follows. Catalyzes the conversion of (8S)-3',8-cyclo-7,8-dihydroguanosine 5'-triphosphate to cyclic pyranopterin monophosphate (cPMP). The polypeptide is Cyclic pyranopterin monophosphate synthase (Staphylococcus aureus (strain MRSA252)).